The following is a 720-amino-acid chain: WSC domain-containing protein ARB_07870 (720 aa).

An N-terminal signal peptide occupies residues 1 to 24; it reads MLINLSAVWAAFALSGVLAPPTWP. N-linked (GlcNAc...) asparagine glycosylation is found at Asn-4, Asn-108, Asn-181, Asn-264, Asn-296, Asn-318, Asn-474, Asn-549, Asn-581, Asn-629, Asn-640, Asn-663, and Asn-701. WSC domains follow at residues 524-615 and 627-718; these read DYTF…YKDD and GYNY…YTKL.

Belongs to the WSCD family.

The protein localises to the secreted. This is WSC domain-containing protein ARB_07870 from Arthroderma benhamiae (strain ATCC MYA-4681 / CBS 112371) (Trichophyton mentagrophytes).